A 728-amino-acid chain; its full sequence is Protein Hook homolog 1 (728 aa).

Position 1 is an N-acetylmethionine (Met-1). A sufficient for interaction with microtubules region spans residues Met-1–Glu-555. The region spanning Leu-12 to Ala-128 is the Calponin-homology (CH) domain. Coiled-coil stretches lie at residues Pro-169 to Gln-434 and Leu-477 to Arg-658. The interval Pro-169–Asp-444 is sufficient for homodimerization, interaction wit HOOK2, HOOK3 and AP4M1. Residue Ser-235 is modified to Phosphoserine. The segment at Gln-481–Leu-512 is disordered. Residues Met-503 to Leu-512 show a composition bias toward basic and acidic residues. The sufficient for interaction with AKTIP and VPS18 stretch occupies residues Phe-657–Asp-728. Thr-699 is modified (phosphothreonine). Residues Ser-719 and Ser-727 each carry the phosphoserine modification.

This sequence belongs to the hook family. As to quaternary structure, self-associates. Component of the FTS/Hook/FHIP complex (FHF complex), composed of AKTIP/FTS, FHIP1B, and one or more members of the Hook family of proteins HOOK1, HOOK2, and HOOK3. Interacts directly with AKTIP/FTS, HOOK2 and HOOK3. Associates with several subunits of the homotypic vesicular sorting complex (the HOPS complex) including VPS16, VPS18, VPS39 and VPS41; these interactions may be indirect. Interacts with CCDC181. Interacts (via coiled-coil region) with RIMBP3 (via C-terminus). Interacts with LRGUK (via guanylate kinase-like domain). Interacts with microtubules. May interact with CLN3. Interacts with AP4M1; the interaction is direct, mediates the interaction between FTS-Hook-FHIP (FHF) complex and AP-4 and the perinuclear distribution of AP-4.

It localises to the cytoplasm. The protein resides in the cytoskeleton. Its function is as follows. Component of the FTS/Hook/FHIP complex (FHF complex). The FHF complex may function to promote vesicle trafficking and/or fusion via the homotypic vesicular protein sorting complex (the HOPS complex). FHF complex promotes the distribution of AP-4 complex to the perinuclear area of the cell. Required for spermatid differentiation. Probably involved in the positioning of the microtubules of the manchette and the flagellum in relation to the membrane skeleton. The chain is Protein Hook homolog 1 from Homo sapiens (Human).